The chain runs to 283 residues: Ribosomal RNA small subunit methyltransferase H (283 aa).

S-adenosyl-L-methionine-binding positions include 31 to 33 (GGH), D50, F77, D93, and Q100.

The protein belongs to the methyltransferase superfamily. RsmH family.

It localises to the cytoplasm. It catalyses the reaction cytidine(1402) in 16S rRNA + S-adenosyl-L-methionine = N(4)-methylcytidine(1402) in 16S rRNA + S-adenosyl-L-homocysteine + H(+). Specifically methylates the N4 position of cytidine in position 1402 (C1402) of 16S rRNA. The chain is Ribosomal RNA small subunit methyltransferase H from Trichodesmium erythraeum (strain IMS101).